A 510-amino-acid polypeptide reads, in one-letter code: Beta-1,4 N-acetylgalactosaminyltransferase 2 (510 aa).

Over 1-15 (MTSSVSFASFRFPWL) the chain is Cytoplasmic. Residues 16 to 32 (LKTFVLMVGLATVAFMV) form a helical; Signal-anchor for type II membrane protein membrane-spanning segment. The Lumenal segment spans residues 33 to 510 (RKVSLTTDFS…YFKNHLYCST (478 aa)). Residue Asn390 is glycosylated (N-linked (GlcNAc...) asparagine).

The protein belongs to the glycosyltransferase 2 family. As to quaternary structure, homodimer; disulfide-linked.

The protein resides in the golgi apparatus. Its subcellular location is the trans-Golgi network membrane. It carries out the reaction an N-acetyl-alpha-neuraminyl-(2-&gt;3)-beta-D-galactosyl derivative + UDP-N-acetyl-alpha-D-galactosamine = an N-acetyl-beta-D-galactosaminyl-(1-&gt;4)-[N-acetyl-alpha-neuraminyl-(2-&gt;3)]-beta-D-galactosyl derivative + UDP + H(+). The catalysed reaction is a 3-O-{alpha-Neu5Ac-(2-&gt;3)-beta-D-Gal-(1-&gt;3)-[alpha-Neu5Ac-(2-&gt;6)]-alpha-D-GalNAc}-L-seryl-[protein] + UDP-N-acetyl-alpha-D-galactosamine = a 3-O-{[alpha-Neu5Ac-(2-&gt;3)]-beta-D-GalNAc-(1-&gt;4)-beta-D-Gal-(1-&gt;3)-[alpha-Neu5Ac-(2-&gt;6)]-alpha-D-GalNAc}-L-seryl-[protein] + UDP + H(+). The enzyme catalyses a 3-O-{alpha-Neu5Ac-(2-&gt;3)-beta-D-Gal-(1-&gt;3)-[alpha-Neu5Ac-(2-&gt;6)]-alpha-D-GalNAc}-L-threonyl-[protein] + UDP-N-acetyl-alpha-D-galactosamine = a 3-O-{[alpha-Neu5Ac-(2-&gt;3)]-beta-D-GalNAc-(1-&gt;4)-beta-D-Gal-(1-&gt;3)-[alpha-Neu5Ac-(2-&gt;6)]-alpha-D-GalNAc}-L-threonyl-[protein] + UDP + H(+). It catalyses the reaction a neolactoside IV(3)-alpha-NeuAc-nLc4Cer + UDP-N-acetyl-alpha-D-galactosamine = a neolactoside IV(4)-GalNAc,IV(3)-alpha-NeuAc-nLc4Cer + UDP + H(+). The protein operates within protein modification; protein glycosylation. It participates in glycolipid biosynthesis. In terms of biological role, beta-1,4 N-acetylgalactosaminyltransferase involved in the biosynthesis of T-lymphocyte CT glycan antigen carried by CD45 family of protein phosphatases. Catalyzes the transfer of N-acetylgalactosamine (GalNAc) group in a beta-1,4-linkage from UDP-GalNAc to the galactose residue of NeuAcalpha2-&gt;3Gal-R to form GalNAcbeta1-&gt;4(NeuAcalpha2-&gt;3)Gal-R glycan epitope. The polypeptide is Beta-1,4 N-acetylgalactosaminyltransferase 2 (Mus musculus (Mouse)).